Reading from the N-terminus, the 302-residue chain is L-threonate dehydrogenase (302 aa).

NAD(+)-binding positions include 7-35 (FHVGIVGLGSMGMGAALSYVRAGLSTWGA) and T102. The active site involves K178. K246 provides a ligand contact to NAD(+).

The protein belongs to the HIBADH-related family. L-threonate dehydrogenase subfamily.

It catalyses the reaction L-threonate + NAD(+) = 2-dehydro-L-erythronate + NADH + H(+). In terms of biological role, catalyzes oxidation of L-threonate to 2-oxo-tetronate. Can use either NAD(+) or NADP(+) as cosubstrate, with a preference for NAD(+). The polypeptide is L-threonate dehydrogenase (Escherichia coli (strain K12)).